The following is a 256-amino-acid chain: Floral homeotic protein APETALA 1 (256 aa).

Positions 1 to 61 (MGRGRVQLKR…GKLFEYSTDS (61 aa)) constitute an MADS-box domain. Residues 88–178 (NTNWSMEYNR…SKQIKEREKI (91 aa)) enclose the K-box domain. The segment at 184-206 (EQWDQQNHGHNMPPPPPPQQHQI) is disordered.

As to quaternary structure, homodimer capable of binding to CArG-box sequences.

It is found in the nucleus. Its function is as follows. Transcription factor that promotes early floral meristem identity in synergy with LEAFY. Displays a redundant function with CAULIFLOWER in the up-regulation of LEAFY. Required subsequently for the transition of an inflorescence meristem into a floral meristem, and for the normal development of sepals and petals in flowers. Regulates positively B class homeotic proteins. This Arabidopsis lyrata subsp. lyrata (Lyre-leaved rock-cress) protein is Floral homeotic protein APETALA 1 (AP1).